The following is a 248-amino-acid chain: Uridylate kinase (248 aa).

15 to 18 (KLSG) lines the ATP pocket. The involved in allosteric activation by GTP stretch occupies residues 23–28 (GAEGFG). Gly57 contacts UMP. The ATP site is built by Gly58 and Arg62. UMP-binding positions include Asp77 and 138–145 (TGNPFFTT). ATP-binding residues include Thr165, Tyr171, and Asp174.

This sequence belongs to the UMP kinase family. In terms of assembly, homohexamer.

It is found in the cytoplasm. It carries out the reaction UMP + ATP = UDP + ADP. Its pathway is pyrimidine metabolism; CTP biosynthesis via de novo pathway; UDP from UMP (UMPK route): step 1/1. With respect to regulation, allosterically activated by GTP. Inhibited by UTP. Catalyzes the reversible phosphorylation of UMP to UDP. The chain is Uridylate kinase from Yersinia enterocolitica serotype O:8 / biotype 1B (strain NCTC 13174 / 8081).